Here is a 365-residue protein sequence, read N- to C-terminus: Phosphoserine aminotransferase (365 aa).

Residue R40 participates in L-glutamate binding. Residues 74–75, F99, T155, D177, and Q200 contribute to the pyridoxal 5'-phosphate site; that span reads AS. Position 201 is an N6-(pyridoxal phosphate)lysine (K201). Pyridoxal 5'-phosphate is bound at residue 241 to 242; that stretch reads NT.

The protein belongs to the class-V pyridoxal-phosphate-dependent aminotransferase family. SerC subfamily. As to quaternary structure, homodimer. Requires pyridoxal 5'-phosphate as cofactor.

It is found in the cytoplasm. It catalyses the reaction O-phospho-L-serine + 2-oxoglutarate = 3-phosphooxypyruvate + L-glutamate. The enzyme catalyses 4-(phosphooxy)-L-threonine + 2-oxoglutarate = (R)-3-hydroxy-2-oxo-4-phosphooxybutanoate + L-glutamate. Its pathway is amino-acid biosynthesis; L-serine biosynthesis; L-serine from 3-phospho-D-glycerate: step 2/3. Catalyzes the reversible conversion of 3-phosphohydroxypyruvate to phosphoserine and of 3-hydroxy-2-oxo-4-phosphonooxybutanoate to phosphohydroxythreonine. This is Phosphoserine aminotransferase from Lactococcus lactis subsp. lactis (strain IL1403) (Streptococcus lactis).